A 391-amino-acid chain; its full sequence is MALPSSRRFKSPTTLAFFLVGVTLVVLNQWFLQEHRQEKAKGPVATRRSLAAVVQRSPLFQVPPCVANASANLLTGFQLLPARIQDFLRYRHCRRFPQLWDAPPKCAGPRGVFLLLAVKSSPAHYERRELIRRTWGQERSYSGRQVLRLFLVGTSPPEEAAREPQLADLLSLEAREYGDVLQWDFSDTFLNLTLKHLHLLDWTAEHCPGVSFLLSCDDDVFVHTANVLSFLEVQSPEHHLFTGQLMVGSVPVRESGSKYFVPPQIFPGVAYPAYCSGGGFLLSRYTVRNLRSAAHHVPLFPIDDAYMGMCLQQAGLAPSSHQGIRPFGVQLPNVQRLSLDPCMYRELLLVHRFAPYEMLLMWKALHNPALHCSHKQVAGSPTAGEQNPDAH.

Over 1–11 (MALPSSRRFKS) the chain is Cytoplasmic. Residues 12–32 (PTTLAFFLVGVTLVVLNQWFL) form a helical; Signal-anchor for type II membrane protein membrane-spanning segment. The Lumenal segment spans residues 33-391 (QEHRQEKAKG…TAGEQNPDAH (359 aa)). Residues N68 and N191 are each glycosylated (N-linked (GlcNAc...) asparagine).

The protein belongs to the glycosyltransferase 31 family.

It is found in the golgi apparatus membrane. The enzyme catalyses a 3-O-[N-acetyl-alpha-D-galactosaminyl]-L-threonyl-[protein] + UDP-N-acetyl-alpha-D-glucosamine = a 3-O-[N-acetyl-beta-D-glucosaminyl-(1-&gt;3)-N-acetyl-alpha-D-galactosaminyl]-L-threonyl-[protein] + UDP + H(+). It carries out the reaction a 3-O-[N-acetyl-alpha-D-galactosaminyl]-L-seryl-[protein] + UDP-N-acetyl-alpha-D-glucosamine = 3-O-[N-acetyl-beta-D-glucosaminyl-(1-&gt;3)-N-acetyl-alpha-D-galactosaminyl]-L-seryl-[protein] + UDP + H(+). Its pathway is protein modification; protein glycosylation. Beta-1,3-N-acetylglucosaminyltransferase that synthesizes the core 3 structure of the O-glycan, an important precursor in the biosynthesis of mucin-type glycoproteins. Plays an important role in the synthesis of mucin-type O-glycans in digestive organs. In Mus musculus (Mouse), this protein is Acetylgalactosaminyl-O-glycosyl-glycoprotein beta-1,3-N-acetylglucosaminyltransferase (B3gnt6).